The primary structure comprises 323 residues: Aldo-keto reductase family 1 member C21 (323 aa).

Residue 20–24 (GFGTA) participates in NADP(+) binding. Lysine 31 serves as a coordination point for substrate. Position 50 (aspartate 50) interacts with NADP(+). Residue tyrosine 55 is the Proton donor of the active site. Position 117 (histidine 117) interacts with substrate. NADP(+) is bound by residues 166-167 (SN), glutamine 190, 216-224 (YGVLGTQRY), and 270-280 (TSLKEERIKEN).

This sequence belongs to the aldo/keto reductase family. Monomer. As to expression, detected in kidney and brain.

The protein localises to the cytoplasm. The enzyme catalyses androsterone + NADP(+) = 5alpha-androstan-3,17-dione + NADPH + H(+). It carries out the reaction androsterone + NAD(+) = 5alpha-androstan-3,17-dione + NADH + H(+). Its activity is regulated as follows. Inhibited by high concentrations of substrate. NADP-dependent 17-alpha-hydroxysteroid dehydrogenase that converts 5-alpha-androstane-3,17-dione into androsterone. Has lower 3-alpha-hydroxysteroid dehydrogenase activity. Has broad substrate specificity and acts on various 17-alpha-hydroxysteroids, 17-ketosteroids, 3-alpha hydroxysteroids and 3-ketosteroids. Reduction of keto groups is strictly stereoselective. Reduction of 17-ketosteroids yields only 17-alpha-hydroxysteroids. Likewise, reduction of 3-ketosteroids yields only 3-alpha-hydroxysteroids. This Mus musculus (Mouse) protein is Aldo-keto reductase family 1 member C21 (Akr1c21).